We begin with the raw amino-acid sequence, 234 residues long: MKLLVSPINSEEAIIASIGGADIVDVKNPKEGSLGANFPWVIREVKAVVNGRQPISATIGDFNYKPGTAALAALGAAVAGADYIKVGLYDIQTESQALELLTKITRAVKDYNPLKKVVASGYSDYKRINSISPLLLPAVAAEAGVDVVMVDTGVKDGKSTFEFMDEKELKEFTDLAHSYGLENAIAGSLKFEDIPLLERIGPDIIGVRGMVCGGDRSTSIRQELVEKLVAECQA.

Lys-27 (schiff-base intermediate with substrate) is an active-site residue. The active-site Proton acceptor is the Lys-85.

Belongs to the MfnB family.

The enzyme catalyses 2 D-glyceraldehyde 3-phosphate = 4-(hydroxymethyl)-2-furancarboxaldehyde phosphate + phosphate + 2 H2O. It participates in cofactor biosynthesis; methanofuran biosynthesis. In terms of biological role, catalyzes the formation of 4-(hydroxymethyl)-2-furancarboxaldehyde phosphate (4-HFC-P) from two molecules of glyceraldehyde-3-P (GA-3-P). The sequence is that of (5-formylfuran-3-yl)methyl phosphate synthase from Methanosarcina mazei (strain ATCC BAA-159 / DSM 3647 / Goe1 / Go1 / JCM 11833 / OCM 88) (Methanosarcina frisia).